The sequence spans 500 residues: MPDAVKVGFVPFATPARGTLIVFCDDGLKFGATATKALGAAVATVKRAAATAQFKGKSGSAMDLLAPEGLKVGRLIVVGAGKVASINDYDLLKLGGAVAGKIGAGDTAVTVVADLPTGAMKPEQAAAIASGIRLRAYKFDRYKTKKKDDENGAANASVTLAVADPAAAKKAFTPDSHVVDGVILARELVNEPPNVLYPEEFAKRAAQLKKLGVEVQILDVKAMTQLKMGALLGVSQGSAHPGRTVIMRWNGGKKGEQPLAFVGKGVCFDTGGISIKPSASMEDMKGDMGGAACVVGLMHALAARKAKVNAVGAIGLVENMPDGNAQRPGDIVTSMSGQTIEIINTDAEGRLVLADVLWYVAQKHKPKFMVDLATLTGAIMVALGTEYAGLFSNNDQLAERLAAVGQSTGEKVWRMPLGPEYDKQIDSQFADMKNTGSRNGGSITAAQFLQRFVDGTPWAHLDIAGTAMASPKNEINQSWGSGYGVRLLNQLVAEYYEAKK.

Positions 264 and 269 each coordinate Mn(2+). The active site involves Lys276. 3 residues coordinate Mn(2+): Asp287, Asp346, and Glu348. Arg350 is an active-site residue.

This sequence belongs to the peptidase M17 family. Requires Mn(2+) as cofactor.

Its subcellular location is the cytoplasm. The catalysed reaction is Release of an N-terminal amino acid, Xaa-|-Yaa-, in which Xaa is preferably Leu, but may be other amino acids including Pro although not Arg or Lys, and Yaa may be Pro. Amino acid amides and methyl esters are also readily hydrolyzed, but rates on arylamides are exceedingly low.. It catalyses the reaction Release of an N-terminal amino acid, preferentially leucine, but not glutamic or aspartic acids.. Functionally, presumably involved in the processing and regular turnover of intracellular proteins. Catalyzes the removal of unsubstituted N-terminal amino acids from various peptides. This chain is Probable cytosol aminopeptidase, found in Rhodopseudomonas palustris (strain TIE-1).